A 613-amino-acid chain; its full sequence is MFNMNVDESASGALGSSAIPVHPTPASVRLFEILQGKYAYVQGQTIYANLRNPGVFSRQVFTHLFKRAISHCTYDDVLHDWNKFEACIQKRWPSDDSCASRFRESTFESWSTTMKLTVRDLLTTNIYRVLHSRSVLSYERYVDWICATGMVPAVKKPITQELHSKIKSLRDRCVCRELGHERTIRSIGTELYEATREIIESLNSTFIPQFTEVTIEYLPRSDEYVAYYCGRRIRLHVLFPPAIFAGTVTFDSPVQRLYQNIFMCYRTLEHAKICQLLNTAPLKAIVGHGGRDMYKDILAHLEQNSQRKDPKKELLNLLVKLSENKTISGVTDVVEEFITDASNNLVDRNRLFGQPGETAAQGLKKKVSNTVVKCLTDQINEQFDQINGLEKERELYLKKIRSMESQLQASLGPGGNNPAASAPAAVAAEAASVDILTGSTASAIEKLFNSPSASLGARVSGHNESILNSFVSQYIPPSREMTKDLTELWESELFNTFKLTPVVDNQGQRLYVRYSSDTISILLGPFTYLVAELSPVELVTDVYATLGIVEIIDELYRSSRLAIYIEDLGRKYCPASATGGDHGIRQAPSARGDAEPDHAKSKPARDPPPGAGS.

The segment at 577–613 is disordered; the sequence is ATGGDHGIRQAPSARGDAEPDHAKSKPARDPPPGAGS. Over residues 592-605 the composition is skewed to basic and acidic residues; that stretch reads GDAEPDHAKSKPAR.

It belongs to the herpesviridae portal protein family. As to quaternary structure, homododecamerizes. Interacts with terminase subunits TRM1 and TRM3.

The protein resides in the virion. Its subcellular location is the host nucleus. Functionally, forms a portal in the viral capsid through which viral DNA is translocated during DNA packaging. Assembles as a dodecamer at a single fivefold axe of the T=16 icosahedric capsid. Binds to the molecular motor that translocates the viral DNA, termed terminase. The protein is Portal protein of Homo sapiens (Human).